The following is a 468-amino-acid chain: ATP synthase subunit beta (468 aa).

155–162 is a binding site for ATP; that stretch reads GGAGVGKT.

It belongs to the ATPase alpha/beta chains family. As to quaternary structure, F-type ATPases have 2 components, CF(1) - the catalytic core - and CF(0) - the membrane proton channel. CF(1) has five subunits: alpha(3), beta(3), gamma(1), delta(1), epsilon(1). CF(0) has three main subunits: a(1), b(2) and c(9-12). The alpha and beta chains form an alternating ring which encloses part of the gamma chain. CF(1) is attached to CF(0) by a central stalk formed by the gamma and epsilon chains, while a peripheral stalk is formed by the delta and b chains.

It is found in the cell membrane. It carries out the reaction ATP + H2O + 4 H(+)(in) = ADP + phosphate + 5 H(+)(out). Its function is as follows. Produces ATP from ADP in the presence of a proton gradient across the membrane. The catalytic sites are hosted primarily by the beta subunits. The protein is ATP synthase subunit beta of Streptococcus pyogenes serotype M6 (strain ATCC BAA-946 / MGAS10394).